A 344-amino-acid polypeptide reads, in one-letter code: Cycloartenol-C-24-methyltransferase 1 (344 aa).

It belongs to the class I-like SAM-binding methyltransferase superfamily. Erg6/SMT family.

It carries out the reaction zymosterol + S-adenosyl-L-methionine = fecosterol + S-adenosyl-L-homocysteine + H(+). It functions in the pathway steroid biosynthesis; sterol biosynthesis. Catalyzes the methyl transfer from S-adenosyl-methionine to the C-24 of cycloartenol to form 24-methylene cycloartenol. The protein is Cycloartenol-C-24-methyltransferase 1 (Smt1-1) of Oryza sativa subsp. japonica (Rice).